A 270-amino-acid chain; its full sequence is MSAPCHCKHVDDSSSNDKLSALSPELQQEFKDPNHPANLICELCRLFYDNNWVTGTGGGISIRDVDGTNPNLVYIAPSGVQKERIQPWEMFLVELPDEKILRTPNDIPKELTKSYKYKPSACTPLFISCYTLRDAGACIHTHSQHAVMVTLFFENEKEFAISHIEQIKALPKLKYNDETGKIEKIGSMEYYDKLVIPIIENTPHEEDLTDSLQEAIKNYPGASAVLVRRHGIYVWGETVWKAKVYNEAIDYLLELAVKMKLAGIPLVKQE.

Residue Cys-122 participates in substrate binding. Zn(2+)-binding residues include His-140 and His-142. The active-site Proton donor/acceptor is Glu-165. His-230 lines the Zn(2+) pocket.

It belongs to the aldolase class II family. MtnB subfamily. The cofactor is Zn(2+).

The protein resides in the cytoplasm. The enzyme catalyses 5-(methylsulfanyl)-D-ribulose 1-phosphate = 5-methylsulfanyl-2,3-dioxopentyl phosphate + H2O. It participates in amino-acid biosynthesis; L-methionine biosynthesis via salvage pathway; L-methionine from S-methyl-5-thio-alpha-D-ribose 1-phosphate: step 2/6. In terms of biological role, catalyzes the dehydration of methylthioribulose-1-phosphate (MTRu-1-P) into 2,3-diketo-5-methylthiopentyl-1-phosphate (DK-MTP-1-P). This Candida albicans (strain WO-1) (Yeast) protein is Methylthioribulose-1-phosphate dehydratase.